We begin with the raw amino-acid sequence, 381 residues long: MKLHEHQAKTIFADAGIPVPDSRLATTVDEALDAVDEIGYPAAIKAQVHVGGRGKAGGIKIATDRDEAEQYAEEILGMDLKGYTVDQILVEQGVDFVDELYVGVTMDRGEGQPVLMVSTEGGVNIEEVAEENPDAIAREHVDPAFGLHPYQARKVVYEAGVDADVALDVASILTTLYDLYEENDASEIEVNPVMITSDRDVIAADAVMNIDEDALFRHPDLAEMAEESYEDDLERKAGEYGFDYVRLSGNVGIIGNGAGLVMTTLDLVDYYGGKPANFLDIGGGAKAERVTKALDMVFSDENVDAVVFNIFGGITRGDEVAKGINEALEQFDEIPKKVVVRLAGTNAEEGMEILNTDLVEVEETLEDAVQRAVKNAEEVTQ.

The ATP-grasp domain maps to Lys-9–Lys-236. ATP-binding positions include Lys-45, Gly-52 to Gly-54, Glu-91, Val-94, and Glu-99. Mg(2+)-binding residues include Asn-191 and Asp-205. Substrate contacts are provided by residues Asn-256 and Gly-313–Thr-315.

It belongs to the succinate/malate CoA ligase beta subunit family. In terms of assembly, heterotetramer of two alpha and two beta subunits. Mg(2+) serves as cofactor.

It catalyses the reaction succinate + ATP + CoA = succinyl-CoA + ADP + phosphate. The catalysed reaction is GTP + succinate + CoA = succinyl-CoA + GDP + phosphate. The protein operates within carbohydrate metabolism; tricarboxylic acid cycle; succinate from succinyl-CoA (ligase route): step 1/1. Succinyl-CoA synthetase functions in the citric acid cycle (TCA), coupling the hydrolysis of succinyl-CoA to the synthesis of either ATP or GTP and thus represents the only step of substrate-level phosphorylation in the TCA. The beta subunit provides nucleotide specificity of the enzyme and binds the substrate succinate, while the binding sites for coenzyme A and phosphate are found in the alpha subunit. This Halorubrum lacusprofundi (strain ATCC 49239 / DSM 5036 / JCM 8891 / ACAM 34) protein is Succinate--CoA ligase [ADP-forming] subunit beta.